Consider the following 388-residue polypeptide: Succinate--CoA ligase [ADP-forming] subunit beta (388 aa).

The ATP-grasp domain occupies 9-244 (KQLFAEYGLP…PSQDDPREAH (236 aa)). ATP-binding positions include K46, 53–55 (GRG), E99, T102, and E107. Mg(2+)-binding residues include N199 and D213. Substrate contacts are provided by residues N264 and 321 to 323 (GIV).

It belongs to the succinate/malate CoA ligase beta subunit family. In terms of assembly, heterotetramer of two alpha and two beta subunits. Mg(2+) serves as cofactor.

The enzyme catalyses succinate + ATP + CoA = succinyl-CoA + ADP + phosphate. It carries out the reaction GTP + succinate + CoA = succinyl-CoA + GDP + phosphate. It participates in carbohydrate metabolism; tricarboxylic acid cycle; succinate from succinyl-CoA (ligase route): step 1/1. In terms of biological role, succinyl-CoA synthetase functions in the citric acid cycle (TCA), coupling the hydrolysis of succinyl-CoA to the synthesis of either ATP or GTP and thus represents the only step of substrate-level phosphorylation in the TCA. The beta subunit provides nucleotide specificity of the enzyme and binds the substrate succinate, while the binding sites for coenzyme A and phosphate are found in the alpha subunit. This is Succinate--CoA ligase [ADP-forming] subunit beta from Pseudomonas putida (strain GB-1).